Consider the following 933-residue polypeptide: Exosome complex exonuclease RRP44 homolog A (933 aa).

The region spanning 50–163 (KIIVVDTNVV…LVTNDRENKR (114 aa)) is the PINc domain. A CSD1 domain is found at 217–321 (QEHKPMSEIT…NVDDAPRTSN (105 aa)). The tract at residues 296 to 336 (AEEDDEEDDTVHLAPDNVDDAPRTSNLSHETSGDKNAAPVR) is disordered. Positions 371 to 438 (ALFVSKDRRI…ETEVVLIEND (68 aa)) constitute a CSD2 domain. The RNB domain occupies 469–798 (RQDLRHLLVF…FVHRLLAASL (330 aa)). The Mg(2+) site is built by aspartate 481 and aspartate 490.

The protein belongs to the RNR ribonuclease family. Probable component of the RNA exosome complex. Mg(2+) serves as cofactor.

The protein localises to the nucleus. Its function is as follows. Catalytic component of the RNA exosome complex which has 3'-&gt;5' exoribonuclease activity and participates in a multitude of cellular RNA processing and degradation events. Required for 5.8S rRNA intermediate processing and the degradation of 5' external transcribed spacer (5' ETS), a maturation by-product of rRNA synthesis. Is not involved in the degradation of turnip crinkle virus (TCV) RNA and significant virus resistance. Required for normal development of female gametophytes and early embryogenesis. This chain is Exosome complex exonuclease RRP44 homolog A, found in Arabidopsis thaliana (Mouse-ear cress).